Here is a 568-residue protein sequence, read N- to C-terminus: Zinc finger protein 76 (568 aa).

Lys-24 participates in a covalent cross-link: Glycyl lysine isopeptide (Lys-Gly) (interchain with G-Cter in SUMO2). A run of 3 repeats spans residues 34–45, 62–73, and 88–99. The tract at residues 34-99 is 3 X 12 AA approximate repeats; that stretch reads IQLEDGTTAY…LEDGSTAYIH (66 aa). 7 consecutive C2H2-type zinc fingers follow at residues 165 to 189, 195 to 219, 225 to 249, 255 to 279, 285 to 309, 315 to 339, and 345 to 368; these read FRCG…ERAH, YRCD…VRTH, YKCP…VRTH, FRCP…VRTH, YTCP…VRIH, YVCT…HVVH, and YTCS…RSAH. The disordered stretch occupies residues 365–401; that stretch reads RSAHGELEATEESEQALYEQQQLEAASAAEESPSPKP. A compositionally biased stretch (low complexity) spans 379–396; sequence QALYEQQQLEAASAAEES.

It belongs to the krueppel C2H2-type zinc-finger protein family.

It localises to the nucleus. May be involved in transcriptional regulation. This is Zinc finger protein 76 (Znf76) from Rattus norvegicus (Rat).